A 631-amino-acid polypeptide reads, in one-letter code: Tumor protein p73 (631 aa).

The transactivation stretch occupies residues 1–43 (MAQTSSSSSSTFEHLWSSLEPDSTYFDLPQPSQGTSEASGSEE). Disordered stretches follow at residues 23–43 (STYF…GSEE) and 69–113 (SRAA…NTDY). Thr-24 bears the Phosphothreonine; by PLK1 mark. Phosphotyrosine; by SRC and HCK is present on Tyr-25. Composition is skewed to polar residues over residues 30–43 (QPSQ…GSEE) and 86–100 (PTHS…TFDT). Tyr-91 is subject to Phosphotyrosine; by ABL1. Positions 123-302 (FQQSSTAKSA…DRKADEDHYR (180 aa)) are DNA-binding. Zn(2+) contacts are provided by Cys-186, His-189, Cys-250, and Cys-254. Polar residues predominate over residues 306-315 (ALNESTTKNG). A disordered region spans residues 306 to 334 (ALNESTTKNGAASKRAFKQSPPAIPALGT). The segment at 337–372 (KKRRHGDEDMFYMHVRGRENFEILMKVKESLELMEL) is interaction with HIPK2. Positions 337–378 (KKRRHGDEDMFYMHVRGRENFEILMKVKESLELMELVPQPLV) are oligomerization. The PPxY motif signature appears at 477–481 (PPPPY). The region spanning 479 to 545 (PPYHADPSLV…WRGLQDLKQS (67 aa)) is the SAM domain. Lys-622 participates in a covalent cross-link: Glycyl lysine isopeptide (Lys-Gly) (interchain with G-Cter in SUMO); alternate. Lys-622 participates in a covalent cross-link: Glycyl lysine isopeptide (Lys-Gly) (interchain with G-Cter in SUMO2); alternate.

This sequence belongs to the p53 family. In terms of assembly, found in a complex with p53/TP53 and CABLES1. The C-terminal oligomerization domain binds to the ABL1 tyrosine kinase SH3 domain. Interacts with HECW2, HIPK2, RANBP9 and WWOX. Interacts (via SAM domain) with FBXO45 (via B30.2/SPRY domain). Interacts with YAP1 (phosphorylated form). Interacts with HCK (via SH3 domain); this inhibits TP73 activity and degradation. Interacts (via SAM domain) with NQO1; this interaction is NADH-dependent, stabilizes TP73 in response to oxidative stress and protects it from ubiquitin-independent degradation by the 20S proteasome. Requires Zn(2+) as cofactor. Post-translationally, sumoylated on Lys-622, which potentiates proteasomal degradation but does not affect transcriptional activity. Phosphorylation by PLK1 and PLK3 inhibits the transcription regulator activity and pro-apoptotic function. Higher levels of phosphorylation seen in striatal neurons of. mutant huntingtin (htt) transgenic mice. In terms of processing, polyubiquitinated by RCHY1/PIRH2; leading to its degradation by the proteasome. As to expression, found in striatal neurons of mutant huntingtin (htt) transgenic mice (at protein level). Isoform 1 is expressed in the nasal epithelium, the vomeronasal organ, the hippocampus and the hypothalamus.

The protein resides in the nucleus. It is found in the cytoplasm. In terms of biological role, participates in the apoptotic response to DNA damage. Isoforms containing the transactivation domain are pro-apoptotic, isoforms lacking the domain are anti-apoptotic and block the function of p53 and transactivating p73 isoforms. May be a tumor suppressor protein. Is an activator of FOXJ1 expression, essential for the positive regulation of lung ciliated cell differentiation. The polypeptide is Tumor protein p73 (Tp73) (Mus musculus (Mouse)).